A 610-amino-acid chain; its full sequence is Glutamine--fructose-6-phosphate aminotransferase [isomerizing] (610 aa).

Cys-2 (nucleophile; for GATase activity) is an active-site residue. The Glutamine amidotransferase type-2 domain maps to 2-218 (CGIVGAVAQR…EGDVAEITRH (217 aa)). SIS domains are found at residues 286–426 (AADI…LKGR) and 459–600 (LSED…VDQP). Residue Lys-605 is the For Fru-6P isomerization activity of the active site.

As to quaternary structure, homodimer.

Its subcellular location is the cytoplasm. It catalyses the reaction D-fructose 6-phosphate + L-glutamine = D-glucosamine 6-phosphate + L-glutamate. Its function is as follows. Catalyzes the first step in hexosamine metabolism, converting fructose-6P into glucosamine-6P using glutamine as a nitrogen source. This is Glutamine--fructose-6-phosphate aminotransferase [isomerizing] from Haemophilus ducreyi (strain 35000HP / ATCC 700724).